Here is an 874-residue protein sequence, read N- to C-terminus: Alanine--tRNA ligase (874 aa).

The Zn(2+) site is built by His562, His566, Cys664, and His668.

Belongs to the class-II aminoacyl-tRNA synthetase family. Requires Zn(2+) as cofactor.

The protein localises to the cytoplasm. The catalysed reaction is tRNA(Ala) + L-alanine + ATP = L-alanyl-tRNA(Ala) + AMP + diphosphate. Functionally, catalyzes the attachment of alanine to tRNA(Ala) in a two-step reaction: alanine is first activated by ATP to form Ala-AMP and then transferred to the acceptor end of tRNA(Ala). Also edits incorrectly charged Ser-tRNA(Ala) and Gly-tRNA(Ala) via its editing domain. The sequence is that of Alanine--tRNA ligase from Neisseria meningitidis serogroup C / serotype 2a (strain ATCC 700532 / DSM 15464 / FAM18).